A 190-amino-acid chain; its full sequence is Potassium-transporting ATPase KdpC subunit (190 aa).

The helical transmembrane segment at 13–33 (IGFLLLTLVCGVLYPGVVTVF) threads the bilayer.

This sequence belongs to the KdpC family. As to quaternary structure, the system is composed of three essential subunits: KdpA, KdpB and KdpC.

The protein resides in the cell membrane. Its function is as follows. Part of the high-affinity ATP-driven potassium transport (or Kdp) system, which catalyzes the hydrolysis of ATP coupled with the electrogenic transport of potassium into the cytoplasm. This subunit acts as a catalytic chaperone that increases the ATP-binding affinity of the ATP-hydrolyzing subunit KdpB by the formation of a transient KdpB/KdpC/ATP ternary complex. The sequence is that of Potassium-transporting ATPase KdpC subunit from Listeria monocytogenes serovar 1/2a (strain ATCC BAA-679 / EGD-e).